A 66-amino-acid chain; its full sequence is Probable Sec-independent protein translocase protein TatE (66 aa).

A helical membrane pass occupies residues 1 to 21 (MEGISITKLLVIAVLIVLLFG). The segment at 46–66 (ETPAAKKSDGVEAAPRVENKE) is disordered.

This sequence belongs to the TatA/E family. TatE subfamily.

It is found in the cell inner membrane. Part of the twin-arginine translocation (Tat) system that transports large folded proteins containing a characteristic twin-arginine motif in their signal peptide across membranes. TatE shares overlapping functions with TatA. The protein is Probable Sec-independent protein translocase protein TatE of Edwardsiella ictaluri (strain 93-146).